The following is an 871-amino-acid chain: Leucine--tRNA ligase (871 aa).

The short motif at 43–53 is the 'HIGH' region element; it reads PYPSGRIHIGH. The 'KMSKS' region signature appears at 629–633; it reads KMSKS. Residue lysine 632 coordinates ATP.

This sequence belongs to the class-I aminoacyl-tRNA synthetase family.

The protein resides in the cytoplasm. The enzyme catalyses tRNA(Leu) + L-leucine + ATP = L-leucyl-tRNA(Leu) + AMP + diphosphate. The polypeptide is Leucine--tRNA ligase (Chelativorans sp. (strain BNC1)).